A 518-amino-acid polypeptide reads, in one-letter code: Arrestin-related trafficking adapter 10 (518 aa).

Residue Lys-118 forms a Glycyl lysine isopeptide (Lys-Gly) (interchain with G-Cter in ubiquitin) linkage.

The protein belongs to the ART10 family. Interacts with RSP5. Ubiquitinated by RSP5.

It is found in the cytoplasm. Its function is as follows. May regulate endocytosis by recruiting RSP5 ubiquitin ligase activity to specific plasma membrane proteins in response to extracellular stimuli. The protein is Arrestin-related trafficking adapter 10 (ART10) of Saccharomyces cerevisiae (strain RM11-1a) (Baker's yeast).